Consider the following 69-residue polypeptide: Small, acid-soluble spore protein I (69 aa).

Belongs to the SspI family.

It localises to the spore core. In Shouchella clausii (strain KSM-K16) (Alkalihalobacillus clausii), this protein is Small, acid-soluble spore protein I.